We begin with the raw amino-acid sequence, 432 residues long: Glutamyl-tRNA reductase (432 aa).

Substrate contacts are provided by residues 49–52, serine 107, 112–114, and glutamine 118; these read TCNR and ETQ. Residue cysteine 50 is the Nucleophile of the active site. 186-191 contributes to the NADP(+) binding site; that stretch reads GAGEMG.

The protein belongs to the glutamyl-tRNA reductase family. Homodimer.

It catalyses the reaction (S)-4-amino-5-oxopentanoate + tRNA(Glu) + NADP(+) = L-glutamyl-tRNA(Glu) + NADPH + H(+). It functions in the pathway porphyrin-containing compound metabolism; protoporphyrin-IX biosynthesis; 5-aminolevulinate from L-glutamyl-tRNA(Glu): step 1/2. Functionally, catalyzes the NADPH-dependent reduction of glutamyl-tRNA(Glu) to glutamate 1-semialdehyde (GSA). This is Glutamyl-tRNA reductase from Campylobacter jejuni subsp. jejuni serotype O:23/36 (strain 81-176).